Reading from the N-terminus, the 221-residue chain is 7-cyano-7-deazaguanine synthase (221 aa).

Residue 9 to 19 (YSGGMDSFTVL) coordinates ATP. Positions 186, 194, 197, and 200 each coordinate Zn(2+).

This sequence belongs to the QueC family. The cofactor is Zn(2+).

It carries out the reaction 7-carboxy-7-deazaguanine + NH4(+) + ATP = 7-cyano-7-deazaguanine + ADP + phosphate + H2O + H(+). It participates in purine metabolism; 7-cyano-7-deazaguanine biosynthesis. In terms of biological role, catalyzes the ATP-dependent conversion of 7-carboxy-7-deazaguanine (CDG) to 7-cyano-7-deazaguanine (preQ(0)). The polypeptide is 7-cyano-7-deazaguanine synthase (Psychromonas ingrahamii (strain DSM 17664 / CCUG 51855 / 37)).